A 122-amino-acid chain; its full sequence is MAWLYVGCGGIAGTLARFLLSRWLGNRVRGTWPLGTLFVNLSGAFLLGLLLALPQGRLPANVTLALGTGFVGAYTTFSTFTYETVTMIGDGEGKRALAYSLGSILGGLLLAWLGWLAAGSLF.

4 consecutive transmembrane segments (helical) span residues 1-21 (MAWLYVGCGGIAGTLARFLLS), 33-53 (PLGTLFVNLSGAFLLGLLLAL), 62-82 (VTLALGTGFVGAYTTFSTFTY), and 102-122 (GSILGGLLLAWLGWLAAGSLF). Na(+) contacts are provided by Gly72 and Thr75.

This sequence belongs to the fluoride channel Fluc/FEX (TC 1.A.43) family.

The protein resides in the cell membrane. It catalyses the reaction fluoride(in) = fluoride(out). Na(+) is not transported, but it plays an essential structural role and its presence is essential for fluoride channel function. In terms of biological role, fluoride-specific ion channel. Important for reducing fluoride concentration in the cell, thus reducing its toxicity. The sequence is that of Fluoride-specific ion channel FluC 2 from Moorella thermoacetica (strain ATCC 39073 / JCM 9320).